The chain runs to 379 residues: Citrate utilization protein B (379 aa).

[4Fe-4S] cluster contacts are provided by cysteine 28, cysteine 31, cysteine 34, cysteine 38, cysteine 62, cysteine 65, cysteine 68, and cysteine 72.

The chain is Citrate utilization protein B (citB) from Escherichia coli.